Reading from the N-terminus, the 379-residue chain is Alcohol dehydrogenase class-2 isozyme 1 (379 aa).

7 residues coordinate Zn(2+): Cys-47, His-69, Cys-99, Cys-102, Cys-105, Cys-113, and Cys-176. NAD(+)-binding positions include 205 to 210, Asp-229, Lys-234, 298 to 300, and Arg-374; these read GLGGVG and VGV.

It belongs to the zinc-containing alcohol dehydrogenase family. Class-II subfamily. In terms of assembly, homodimer. The cofactor is Zn(2+).

It localises to the cytoplasm. The enzyme catalyses a primary alcohol + NAD(+) = an aldehyde + NADH + H(+). It carries out the reaction a secondary alcohol + NAD(+) = a ketone + NADH + H(+). The protein is Alcohol dehydrogenase class-2 isozyme 1 (ADH2-1) of Oryctolagus cuniculus (Rabbit).